Reading from the N-terminus, the 572-residue chain is Receptor-type adenylate cyclase GRESAG 4.2 (572 aa).

Over 1 to 225 (RKTLLTFGLN…PNGNALTPAQ (225 aa)) the chain is Extracellular. N-linked (GlcNAc...) asparagine glycosylation is found at Asn10, Asn77, and Asn152. Residues 226 to 251 (LDWCGWCRFACADTGSRLTVFLCCIM) traverse the membrane as a helical segment. Residues 252–572 (RNKRDNDNAP…TVRRLSVALQ (321 aa)) lie on the Cytoplasmic side of the membrane. One can recognise a Guanylate cyclase domain in the interval 269–424 (TLIFTDIESS…QTANTAARTE (156 aa)). 2 residues coordinate Mg(2+): Asp274 and Asp317.

It belongs to the adenylyl cyclase class-3 family. Mg(2+) is required as a cofactor.

The protein localises to the cell membrane. It carries out the reaction ATP = 3',5'-cyclic AMP + diphosphate. Could act as a receptor for an unknown ligand. This Trypanosoma brucei brucei protein is Receptor-type adenylate cyclase GRESAG 4.2 (GRESAG 4.2).